Here is a 93-residue protein sequence, read N- to C-terminus: Acylphosphatase (93 aa).

The Acylphosphatase-like domain maps to Lys-3–Tyr-93. Active-site residues include Arg-18 and Asn-36.

This sequence belongs to the acylphosphatase family.

The catalysed reaction is an acyl phosphate + H2O = a carboxylate + phosphate + H(+). The polypeptide is Acylphosphatase (acyP) (Borrelia garinii subsp. bavariensis (strain ATCC BAA-2496 / DSM 23469 / PBi) (Borreliella bavariensis)).